The sequence spans 892 residues: Alanine--tRNA ligase (892 aa).

Zn(2+) is bound by residues histidine 596, histidine 600, cysteine 700, and histidine 704.

Belongs to the class-II aminoacyl-tRNA synthetase family. Zn(2+) serves as cofactor.

It localises to the cytoplasm. The catalysed reaction is tRNA(Ala) + L-alanine + ATP = L-alanyl-tRNA(Ala) + AMP + diphosphate. Its function is as follows. Catalyzes the attachment of alanine to tRNA(Ala) in a two-step reaction: alanine is first activated by ATP to form Ala-AMP and then transferred to the acceptor end of tRNA(Ala). Also edits incorrectly charged Ser-tRNA(Ala) and Gly-tRNA(Ala) via its editing domain. The protein is Alanine--tRNA ligase of Methanococcus vannielii (strain ATCC 35089 / DSM 1224 / JCM 13029 / OCM 148 / SB).